Here is a 263-residue protein sequence, read N- to C-terminus: Malonyl-[acyl-carrier protein] O-methyltransferase (263 aa).

This sequence belongs to the methyltransferase superfamily.

It carries out the reaction malonyl-[ACP] + S-adenosyl-L-methionine = malonyl-[ACP] methyl ester + S-adenosyl-L-homocysteine. Its pathway is cofactor biosynthesis; biotin biosynthesis. In terms of biological role, converts the free carboxyl group of a malonyl-thioester to its methyl ester by transfer of a methyl group from S-adenosyl-L-methionine (SAM). It allows to synthesize pimeloyl-ACP via the fatty acid synthetic pathway. This chain is Malonyl-[acyl-carrier protein] O-methyltransferase, found in Chlorobium luteolum (strain DSM 273 / BCRC 81028 / 2530) (Pelodictyon luteolum).